Here is a 313-residue protein sequence, read N- to C-terminus: Uracil-DNA glycosylase (313 aa).

The span at 1 to 12 (MIGQKTLYSFFS) shows a compositional bias: polar residues. The interaction with FAM72A stretch occupies residues 1-25 (MIGQKTLYSFFSPSPARKRHAPSPE). The mitochondrial localization signal stretch occupies residues 1–29 (MIGQKTLYSFFSPSPARKRHAPSPEPAVQ). A disordered region spans residues 1 to 68 (MIGQKTLYSF…GTPPSSPLSA (68 aa)). Phosphoserine is present on residues Ser-12 and Ser-14. The short motif at 17–19 (RKR) is the Important for nuclear sorting element. Phosphoserine is present on Ser-23. Residues 43–53 (AAAIPAKKAPA) show a composition bias toward low complexity. Thr-60 carries the phosphothreonine modification. Ser-64 bears the Phosphoserine mark. The interaction with RPA2 stretch occupies residues 73–88 (RIQRNKAAALLRLAAR). Uracil is bound at residue Gln-153. Asp-154 serves as the catalytic Proton acceptor. His-157 lines the dsDNA pocket. Phe-167 contacts uracil. Residue Ser-178 coordinates dsDNA. Asn-213 is a uracil binding site. Residues Ser-256, His-277, Ser-279, Ser-282, and Arg-285 each contribute to the dsDNA site. His-277 contributes to the uracil binding site. Position 295 is an N6-acetyllysine (Lys-295).

This sequence belongs to the uracil-DNA glycosylase (UDG) superfamily. UNG family. Monomer. As to quaternary structure, interacts with RPA2 subunit of the RPA trimer; this interaction mediates UNG2 recruitment to RPA-coated single-stranded DNA at stalled replication forks. Interacts with PCNA; this interaction mediates UNG2 recruitment to S-phase replication foci. Interacts (via N-terminus) with FAM72A. In terms of assembly, (Microbial infection) Interacts with HIV-1 Vpr. Processed by mitochondrial serine or cysteine peptidases to yield a mature dominant form that lacks N-terminal 29 amino acid residues and another minor form that lacks N-terminal 77 amino acid residues. The catalytic activity of UNG1 delta29 is not product-inhibited by AP sites.

It localises to the mitochondrion. Its subcellular location is the nucleus. The catalysed reaction is Hydrolyzes single-stranded DNA or mismatched double-stranded DNA and polynucleotides, releasing free uracil.. The enzyme catalyses a 2'-deoxyuridine in single-stranded DNA + H2O = a 2'-deoxyribose 5'-monophosphate in single-stranded DNA + uracil. It carries out the reaction a 2'-deoxyuridine in double-stranded DNA + H2O = a 2'-deoxyribose 5'-monophosphate in double-stranded DNA + uracil. In terms of biological role, uracil-DNA glycosylase that hydrolyzes the N-glycosidic bond between uracil and deoxyribose in single- and double-stranded DNA (ssDNA and dsDNA) to release a free uracil residue and form an abasic (apurinic/apyrimidinic; AP) site. Excises uracil residues arising as a result of misincorporation of dUMP residues by DNA polymerase during replication or due to spontaneous or enzymatic deamination of cytosine. Mediates error-free base excision repair (BER) of uracil at replication forks. According to the model, it is recruited by PCNA to S-phase replication forks to remove misincorporated uracil at U:A base mispairs in nascent DNA strands. Via trimeric RPA it is recruited to ssDNA stretches ahead of the polymerase to allow detection and excision of deaminated cytosines prior to replication. The resultant AP sites temporarily stall replication, allowing time to repair the lesion. Mediates mutagenic uracil processing involved in antibody affinity maturation. Processes AICDA-induced U:G base mispairs at variable immunoglobulin (Ig) regions leading to the generation of transversion mutations. Operates at switch sites of Ig constant regions where it mediates Ig isotype class switch recombination. Excises AICDA-induced uracil residues forming AP sites that are subsequently nicked by APEX1 endonuclease. The accumulation of staggered nicks in opposite strands results in double strand DNA breaks that are finally resolved via non-homologous end joining repair pathway. The chain is Uracil-DNA glycosylase from Homo sapiens (Human).